The primary structure comprises 113 residues: Putative pterin-4-alpha-carbinolamine dehydratase (113 aa).

Belongs to the pterin-4-alpha-carbinolamine dehydratase family.

The catalysed reaction is (4aS,6R)-4a-hydroxy-L-erythro-5,6,7,8-tetrahydrobiopterin = (6R)-L-erythro-6,7-dihydrobiopterin + H2O. In Rickettsia bellii (strain OSU 85-389), this protein is Putative pterin-4-alpha-carbinolamine dehydratase.